Consider the following 277-residue polypeptide: Undecaprenyl-diphosphatase (277 aa).

Transmembrane regions (helical) follow at residues 3–23, 48–68, 97–117, 125–145, 198–218, 227–247, and 257–277; these read YIIE…TEIF, LTLF…IYYF, ISYA…GLLI, LLSI…VFLL, SFLC…YDAI, IPGF…TIKI, and LIWF…LYII.

The protein belongs to the UppP family.

The protein resides in the cell membrane. It catalyses the reaction di-trans,octa-cis-undecaprenyl diphosphate + H2O = di-trans,octa-cis-undecaprenyl phosphate + phosphate + H(+). Functionally, catalyzes the dephosphorylation of undecaprenyl diphosphate (UPP). Confers resistance to bacitracin. The chain is Undecaprenyl-diphosphatase from Acholeplasma laidlawii (strain PG-8A).